The sequence spans 839 residues: Autophagy-related protein 9A (839 aa).

Alanine 2 carries the N-acetylalanine modification. The Cytoplasmic segment spans residues 2–61 (AQFDTEYQRLEASYSDSPPGEEDLLVHVAEGSKSPWHHIENLDLFFSRVYNLHQKNGFTC). Residues 8 to 11 (YQRL) carry the Tyrosine-based sorting signal motif. Phosphoserine is present on residues serine 14, serine 16, and serine 18. Residues 62 to 84 (MLIGEMFELMQFLFVVAFTTFLV) form a helical membrane-spanning segment. At 85–128 (SCVDYDILFANKMVNHSLHPTEPVKVTLPDAFLPAQVCSARIQE) the chain is on the lumenal side. Asparagine 99 carries an N-linked (GlcNAc...) asparagine glycan. A helical transmembrane segment spans residues 129 to 154 (NGSLITILVIAGVFWIHRLIKFIYNI). Topologically, residues 155–290 (CCYWEIHSFY…ELAQRLSNRI (136 aa)) are cytoplasmic. Residues 291–301 (LWIGIANFLLC) lie within the membrane without spanning it. Topologically, residues 302-319 (PLILIWQILYAFFSYAEV) are cytoplasmic. Residues 320–328 (LKREPGALG) lie within the membrane without spanning it. Residues 329–371 (ARCWSLYGRCYLRHFNELEHELQSRLNRGYKPASKYMNCFLSP) lie on the Cytoplasmic side of the membrane. The chain crosses the membrane as a helical span at residues 372–397 (LLTLLAKNGAFFAGSILAVLIALTIY). Over 398–406 (DEDVLAVEH) the chain is Lumenal. A helical transmembrane segment spans residues 407–424 (VLTTVTLLGVTVTVCRSF). The Cytoplasmic portion of the chain corresponds to 425-470 (IPDQHMVFCPEQLLRVILAHIHYMPDHWQGNAHRSQTRDEFAQLFQ). An intramembrane segment occupies 471–480 (YKAVFILEEL). At 481 to 483 (LSP) the chain is on the cytoplasmic side. An intramembrane segment occupies 484–492 (IVTPLILIF). At 493-839 (CLRPRALEII…DELPPQVHKV (347 aa)) the chain is on the cytoplasmic side. Phosphoserine is present on serine 656. 2 disordered regions span residues 657 to 686 (PLQP…SSGS) and 717 to 839 (HKQQ…VHKV). The segment covering 724–736 (EPERHVWHRRESD) has biased composition (basic and acidic residues). Phosphoserine occurs at positions 735, 738, 741, and 828. Composition is skewed to acidic residues over residues 737–747 (ESGESAPEEGG) and 823–832 (VPEEGSEDEL).

This sequence belongs to the ATG9 family. As to quaternary structure, homotrimer; forms a homotrimer with a central pore that forms a path between the two membrane leaflets. Interacts (via cytoplasmic its C-terminus) with ATG2A. Interacts with SUPT20H. Interacts (via the tyrosine-based sorting signal motif) with AP4M1; promoting association with the AP-4 complex. Interacts with ARFIP1 and ARFIP2. Interacts with ATG4A; the interaction is direct and promotes ATG9A trafficking. In terms of processing, ufmylated in a DDRGK1 dependent manner.

It is found in the preautophagosomal structure membrane. The protein localises to the cytoplasmic vesicle. The protein resides in the autophagosome membrane. Its subcellular location is the golgi apparatus. It localises to the trans-Golgi network membrane. It is found in the late endosome membrane. The protein localises to the recycling endosome membrane. The protein resides in the endoplasmic reticulum membrane. Its subcellular location is the mitochondrion membrane. It catalyses the reaction a 1,2-diacyl-sn-glycero-3-phosphocholine(in) = a 1,2-diacyl-sn-glycero-3-phosphocholine(out). The enzyme catalyses a 1,2-diacyl-sn-glycero-3-phospho-L-serine(in) = a 1,2-diacyl-sn-glycero-3-phospho-L-serine(out). The catalysed reaction is a 1,2-diacyl-sn-glycero-3-phosphoethanolamine(in) = a 1,2-diacyl-sn-glycero-3-phosphoethanolamine(out). In terms of biological role, phospholipid scramblase involved in autophagy by mediating autophagosomal membrane expansion. Cycles between the preautophagosomal structure/phagophore assembly site (PAS) and the cytoplasmic vesicle pool and supplies membrane for the growing autophagosome. Lipid scramblase activity plays a key role in preautophagosomal structure/phagophore assembly by distributing the phospholipids that arrive through ATG2 (ATG2A or ATG2B) from the cytoplasmic to the luminal leaflet of the bilayer, thereby driving autophagosomal membrane expansion. Also required to supply phosphatidylinositol 4-phosphate to the autophagosome initiation site by recruiting the phosphatidylinositol 4-kinase beta (PI4KB) in a process dependent on ARFIP2, but not ARFIP1. In addition to autophagy, also plays a role in necrotic cell death. The protein is Autophagy-related protein 9A of Mus musculus (Mouse).